A 360-amino-acid chain; its full sequence is 3-dehydroquinate synthase (360 aa).

NAD(+)-binding positions include 70–75 (DGEKYK), 104–108 (GVIGD), 128–129 (TT), lysine 141, and lysine 150. Residues glutamate 183, histidine 246, and histidine 263 each coordinate Zn(2+).

The protein belongs to the sugar phosphate cyclases superfamily. Dehydroquinate synthase family. Co(2+) serves as cofactor. It depends on Zn(2+) as a cofactor. The cofactor is NAD(+).

The protein localises to the cytoplasm. It carries out the reaction 7-phospho-2-dehydro-3-deoxy-D-arabino-heptonate = 3-dehydroquinate + phosphate. It functions in the pathway metabolic intermediate biosynthesis; chorismate biosynthesis; chorismate from D-erythrose 4-phosphate and phosphoenolpyruvate: step 2/7. In terms of biological role, catalyzes the conversion of 3-deoxy-D-arabino-heptulosonate 7-phosphate (DAHP) to dehydroquinate (DHQ). In Acinetobacter baumannii (strain AYE), this protein is 3-dehydroquinate synthase.